Here is a 211-residue protein sequence, read N- to C-terminus: ATP phosphoribosyltransferase (211 aa).

The protein belongs to the ATP phosphoribosyltransferase family. Short subfamily. As to quaternary structure, heteromultimer composed of HisG and HisZ subunits.

Its subcellular location is the cytoplasm. It catalyses the reaction 1-(5-phospho-beta-D-ribosyl)-ATP + diphosphate = 5-phospho-alpha-D-ribose 1-diphosphate + ATP. It participates in amino-acid biosynthesis; L-histidine biosynthesis; L-histidine from 5-phospho-alpha-D-ribose 1-diphosphate: step 1/9. Catalyzes the condensation of ATP and 5-phosphoribose 1-diphosphate to form N'-(5'-phosphoribosyl)-ATP (PR-ATP). Has a crucial role in the pathway because the rate of histidine biosynthesis seems to be controlled primarily by regulation of HisG enzymatic activity. The polypeptide is ATP phosphoribosyltransferase (Pseudomonas paraeruginosa (strain DSM 24068 / PA7) (Pseudomonas aeruginosa (strain PA7))).